The sequence spans 317 residues: NADH-quinone oxidoreductase subunit H 1 (317 aa).

Transmembrane regions (helical) follow at residues 7–27 (IWVN…MLSW), 74–94 (AVFV…FAVV), 107–127 (IGVL…VLGG), 147–167 (LSYE…AGSF), 179–199 (LWFC…GIAE), 230–250 (FFIG…TLFF), 257–277 (VLPP…CFVL), and 297–317 (VMLP…LSVA).

Belongs to the complex I subunit 1 family. In terms of assembly, NDH-1 is composed of 14 different subunits. Subunits NuoA, H, J, K, L, M, N constitute the membrane sector of the complex.

Its subcellular location is the cell inner membrane. It carries out the reaction a quinone + NADH + 5 H(+)(in) = a quinol + NAD(+) + 4 H(+)(out). Functionally, NDH-1 shuttles electrons from NADH, via FMN and iron-sulfur (Fe-S) centers, to quinones in the respiratory chain. The immediate electron acceptor for the enzyme in this species is believed to be ubiquinone. Couples the redox reaction to proton translocation (for every two electrons transferred, four hydrogen ions are translocated across the cytoplasmic membrane), and thus conserves the redox energy in a proton gradient. This subunit may bind ubiquinone. This is NADH-quinone oxidoreductase subunit H 1 from Nitrosospira multiformis (strain ATCC 25196 / NCIMB 11849 / C 71).